The chain runs to 272 residues: HMP-PP phosphatase (272 aa).

The Nucleophile role is filled by Asp8. Positions 8, 10, and 212 each coordinate Mg(2+).

It belongs to the HAD-like hydrolase superfamily. Cof family. Mg(2+) serves as cofactor.

The enzyme catalyses 4-amino-2-methyl-5-(diphosphooxymethyl)pyrimidine + H2O = 4-amino-2-methyl-5-(phosphooxymethyl)pyrimidine + phosphate + H(+). Functionally, catalyzes the hydrolysis of 4-amino-2-methyl-5-hydroxymethylpyrimidine pyrophosphate (HMP-PP) to 4-amino-2-methyl-5-hydroxymethylpyrimidine phosphate (HMP-P). This Klebsiella pneumoniae (strain 342) protein is HMP-PP phosphatase.